Consider the following 86-residue polypeptide: Translation initiation factor IF-1 2 (86 aa).

One can recognise an S1-like domain in the interval 1–72 (MAKEELLEME…SKGRITFRHI (72 aa)).

The protein belongs to the IF-1 family. Component of the 30S ribosomal translation pre-initiation complex which assembles on the 30S ribosome in the order IF-2 and IF-3, IF-1 and N-formylmethionyl-tRNA(fMet); mRNA recruitment can occur at any time during PIC assembly.

The protein localises to the cytoplasm. Its function is as follows. One of the essential components for the initiation of protein synthesis. Stabilizes the binding of IF-2 and IF-3 on the 30S subunit to which N-formylmethionyl-tRNA(fMet) subsequently binds. Helps modulate mRNA selection, yielding the 30S pre-initiation complex (PIC). Upon addition of the 50S ribosomal subunit IF-1, IF-2 and IF-3 are released leaving the mature 70S translation initiation complex. This is Translation initiation factor IF-1 2 from Polynucleobacter asymbioticus (strain DSM 18221 / CIP 109841 / QLW-P1DMWA-1) (Polynucleobacter necessarius subsp. asymbioticus).